The chain runs to 320 residues: Methylenetetrahydrofolate dehydrogenase [NAD(+)] (320 aa).

The active site involves C150. Residues 185–186, 208–209, and 274–276 each bind NAD(+); these read RS, DV, and FAC.

The protein belongs to the tetrahydrofolate dehydrogenase/cyclohydrolase family. As to quaternary structure, homodimer. The N-terminus is blocked.

Its subcellular location is the cytoplasm. It is found in the nucleus. The enzyme catalyses (6R)-5,10-methylene-5,6,7,8-tetrahydrofolate + NAD(+) = (6R)-5,10-methenyltetrahydrofolate + NADH. Catalyzes oxidation of cytoplasmic one-carbon units for purine biosynthesis. The sequence is that of Methylenetetrahydrofolate dehydrogenase [NAD(+)] (MTD1) from Saccharomyces cerevisiae (strain ATCC 204508 / S288c) (Baker's yeast).